The following is a 748-amino-acid chain: Phosphoenolpyruvate-dependent phosphotransferase system (748 aa).

The GAF domain maps to 1–127 (MLTRLREIVE…RRQLLGVLVV (127 aa)). Residues 128-170 (QQRELRQYDESEESFLVTLATQMAAILSQSQLTALFGQYRQTR) form a linker region. The PTS EI stretch occupies residues 171 to 748 (IRALPAAPGV…GMGGLIRGGL (578 aa)). H356 serves as the catalytic Tele-phosphohistidine intermediate. Phosphoenolpyruvate is bound by residues R462 and R498. Mg(2+)-binding residues include E597 and D621. Residues 620–621 (ND) and R631 contribute to the phosphoenolpyruvate site. The Proton donor role is filled by C668.

The protein belongs to the PEP-utilizing enzyme family. Mg(2+) serves as cofactor.

The protein resides in the cytoplasm. The enzyme catalyses L-histidyl-[protein] + phosphoenolpyruvate = N(pros)-phospho-L-histidyl-[protein] + pyruvate. Its activity is regulated as follows. Inhibited by GDP and FAD. In terms of biological role, component of the phosphoenolpyruvate-dependent nitrogen-metabolic phosphotransferase system (nitrogen-metabolic PTS), that seems to be involved in regulating nitrogen metabolism. Enzyme I-Ntr transfers the phosphoryl group from phosphoenolpyruvate (PEP) to the phosphoryl carrier protein (NPr). Could function in the transcriptional regulation of sigma-54 dependent operons in conjunction with the NPr (PtsO) and EIIA-Ntr (PtsN) proteins. Enzyme I-Ntr is specific for NPr. This Escherichia coli (strain K12) protein is Phosphoenolpyruvate-dependent phosphotransferase system (ptsP).